The sequence spans 312 residues: tRNA dimethylallyltransferase (312 aa).

ATP is bound at residue 11 to 18; that stretch reads GLTATGKT. 13-18 is a binding site for substrate; it reads TATGKT. Positions 36 to 39 are interaction with substrate tRNA; sequence DSMC.

This sequence belongs to the IPP transferase family. Monomer. Mg(2+) serves as cofactor.

The catalysed reaction is adenosine(37) in tRNA + dimethylallyl diphosphate = N(6)-dimethylallyladenosine(37) in tRNA + diphosphate. In terms of biological role, catalyzes the transfer of a dimethylallyl group onto the adenine at position 37 in tRNAs that read codons beginning with uridine, leading to the formation of N6-(dimethylallyl)adenosine (i(6)A). The protein is tRNA dimethylallyltransferase of Caldicellulosiruptor saccharolyticus (strain ATCC 43494 / DSM 8903 / Tp8T 6331).